We begin with the raw amino-acid sequence, 101 residues long: Signal recognition particle 19 kDa protein (101 aa).

Belongs to the SRP19 family. As to quaternary structure, part of the signal recognition particle protein translocation system, which is composed of SRP and FtsY. Archaeal SRP consists of a 7S RNA molecule of 300 nucleotides and two protein subunits: SRP54 and SRP19.

The protein localises to the cytoplasm. Its function is as follows. Involved in targeting and insertion of nascent membrane proteins into the cytoplasmic membrane. Binds directly to 7S RNA and mediates binding of the 54 kDa subunit of the SRP. This chain is Signal recognition particle 19 kDa protein, found in Methanosarcina mazei (strain ATCC BAA-159 / DSM 3647 / Goe1 / Go1 / JCM 11833 / OCM 88) (Methanosarcina frisia).